We begin with the raw amino-acid sequence, 124 residues long: Small ribosomal subunit protein uS12 (124 aa).

The tract at residues 1–32 (MPTIQQLVRKGRQDKVSKNKTPALKGSPQRRG) is disordered. Residue Asp89 is modified to 3-methylthioaspartic acid.

Belongs to the universal ribosomal protein uS12 family. In terms of assembly, part of the 30S ribosomal subunit. Contacts proteins S8 and S17. May interact with IF1 in the 30S initiation complex.

In terms of biological role, with S4 and S5 plays an important role in translational accuracy. Interacts with and stabilizes bases of the 16S rRNA that are involved in tRNA selection in the A site and with the mRNA backbone. Located at the interface of the 30S and 50S subunits, it traverses the body of the 30S subunit contacting proteins on the other side and probably holding the rRNA structure together. The combined cluster of proteins S8, S12 and S17 appears to hold together the shoulder and platform of the 30S subunit. In Nocardioides sp. (strain ATCC BAA-499 / JS614), this protein is Small ribosomal subunit protein uS12.